A 101-amino-acid polypeptide reads, in one-letter code: Small ribosomal subunit protein uS14 (101 aa).

A disordered region spans residues 52 to 72 (PRDSSPVRQRRRCRSTGRPRG). The span at 59–72 (RQRRRCRSTGRPRG) shows a compositional bias: basic residues.

Belongs to the universal ribosomal protein uS14 family. In terms of assembly, part of the 30S ribosomal subunit. Contacts proteins S3 and S10.

Functionally, binds 16S rRNA, required for the assembly of 30S particles and may also be responsible for determining the conformation of the 16S rRNA at the A site. This chain is Small ribosomal subunit protein uS14, found in Nitrosococcus oceani (strain ATCC 19707 / BCRC 17464 / JCM 30415 / NCIMB 11848 / C-107).